The sequence spans 814 residues: Protein kintoun (814 aa).

A compositionally biased stretch (low complexity) spans Ala-234–Pro-246. Disordered stretches follow at residues Ala-234–Cys-259 and Ala-357–Pro-490. Positions Ala-388–Lys-404 are enriched in basic and acidic residues. Residues Ser-444 and Ser-618 each carry the phosphoserine modification. A disordered region spans residues Ala-654–Asp-686. Over residues Ala-675–Asp-686 the composition is skewed to low complexity.

It belongs to the PIH1 family. Kintoun subfamily. As to quaternary structure, interacts with DNAI2 and HSPA1A. Interacts with CFAP300. Interacts with DNAAF4. Interacts with DNAAF6/PIH1D3. Expressed in nearly all organs of adult, with higher expression in tissues known to have motile cilia and flagella, such as brain and testis.

It localises to the cytoplasm. The protein localises to the dynein axonemal particle. In terms of biological role, required for cytoplasmic pre-assembly of axonemal dyneins, thereby playing a central role in motility in cilia and flagella. Involved in pre-assembly of dynein arm complexes in the cytoplasm before intraflagellar transport loads them for the ciliary compartment. The protein is Protein kintoun of Mus musculus (Mouse).